Here is a 184-residue protein sequence, read N- to C-terminus: Probable DNA-directed RNA polymerase subunit delta (184 aa).

The region spanning 14–82 (KSFIDMAHTL…GENNWGLRDW (69 aa)) is the HTH HARE-type domain. The segment at 114–184 (LLGEEEEEID…FNDDPDDDKI (71 aa)) is disordered. Positions 117–184 (EEEEEIDDQE…FNDDPDDDKI (68 aa)) are enriched in acidic residues.

The protein belongs to the RpoE family. In terms of assembly, RNAP is composed of a core of 2 alpha, a beta and a beta' subunits. The core is associated with a delta subunit and one of several sigma factors.

Participates in both the initiation and recycling phases of transcription. In the presence of the delta subunit, RNAP displays an increased specificity of transcription, a decreased affinity for nucleic acids, and an increased efficiency of RNA synthesis because of enhanced recycling. The polypeptide is Probable DNA-directed RNA polymerase subunit delta (Staphylococcus carnosus (strain TM300)).